A 320-amino-acid polypeptide reads, in one-letter code: HPr kinase/phosphorylase (320 aa).

Active-site residues include His141 and Lys162. 156–163 (GHSGLGKS) contacts ATP. Ser163 contacts Mg(2+). Asp180 acts as the Proton acceptor; for phosphorylation activity. Proton donor; for dephosphorylation activity in catalysis. Residues 204–213 (LEVRGLGILN) form an important for the catalytic mechanism of both phosphorylation and dephosphorylation region. Glu205 contacts Mg(2+). Arg248 is a catalytic residue. The segment at 269–274 (PVAVGR) is important for the catalytic mechanism of dephosphorylation.

The protein belongs to the HPrK/P family. As to quaternary structure, homohexamer. It depends on Mg(2+) as a cofactor.

The enzyme catalyses [HPr protein]-L-serine + ATP = [HPr protein]-O-phospho-L-serine + ADP + H(+). The catalysed reaction is [HPr protein]-O-phospho-L-serine + phosphate + H(+) = [HPr protein]-L-serine + diphosphate. Functionally, catalyzes the ATP- as well as the pyrophosphate-dependent phosphorylation of a specific serine residue in HPr, a phosphocarrier protein of the phosphoenolpyruvate-dependent sugar phosphotransferase system (PTS). HprK/P also catalyzes the pyrophosphate-producing, inorganic phosphate-dependent dephosphorylation (phosphorolysis) of seryl-phosphorylated HPr (P-Ser-HPr). This chain is HPr kinase/phosphorylase, found in Neisseria meningitidis serogroup A / serotype 4A (strain DSM 15465 / Z2491).